Reading from the N-terminus, the 376-residue chain is Probable tRNA sulfurtransferase (376 aa).

The 102-residue stretch at 51–152 (EENLKNLKYV…KNSVYVFDKS (102 aa)) folds into the THUMP domain. ATP-binding positions include 170 to 171 (LI), 195 to 196 (TF), Arg252, Gly274, and Gln283.

Belongs to the ThiI family.

It localises to the cytoplasm. It carries out the reaction [ThiI sulfur-carrier protein]-S-sulfanyl-L-cysteine + a uridine in tRNA + 2 reduced [2Fe-2S]-[ferredoxin] + ATP + H(+) = [ThiI sulfur-carrier protein]-L-cysteine + a 4-thiouridine in tRNA + 2 oxidized [2Fe-2S]-[ferredoxin] + AMP + diphosphate. It catalyses the reaction [ThiS sulfur-carrier protein]-C-terminal Gly-Gly-AMP + S-sulfanyl-L-cysteinyl-[cysteine desulfurase] + AH2 = [ThiS sulfur-carrier protein]-C-terminal-Gly-aminoethanethioate + L-cysteinyl-[cysteine desulfurase] + A + AMP + 2 H(+). It participates in cofactor biosynthesis; thiamine diphosphate biosynthesis. Catalyzes the ATP-dependent transfer of a sulfur to tRNA to produce 4-thiouridine in position 8 of tRNAs, which functions as a near-UV photosensor. Also catalyzes the transfer of sulfur to the sulfur carrier protein ThiS, forming ThiS-thiocarboxylate. This is a step in the synthesis of thiazole, in the thiamine biosynthesis pathway. The sulfur is donated as persulfide by IscS. The sequence is that of Probable tRNA sulfurtransferase from Mycoplasmopsis synoviae (strain 53) (Mycoplasma synoviae).